Consider the following 89-residue polypeptide: Small ribosomal subunit protein uS15 (89 aa).

It belongs to the universal ribosomal protein uS15 family. As to quaternary structure, part of the 30S ribosomal subunit. Forms a bridge to the 50S subunit in the 70S ribosome, contacting the 23S rRNA.

In terms of biological role, one of the primary rRNA binding proteins, it binds directly to 16S rRNA where it helps nucleate assembly of the platform of the 30S subunit by binding and bridging several RNA helices of the 16S rRNA. Functionally, forms an intersubunit bridge (bridge B4) with the 23S rRNA of the 50S subunit in the ribosome. The polypeptide is Small ribosomal subunit protein uS15 (Mannheimia succiniciproducens (strain KCTC 0769BP / MBEL55E)).